Reading from the N-terminus, the 640-residue chain is MSFRSLLALSGLVCTGLANVISKRATLDSWLSNEATVARTAILNNIGADGAWVSGADSGIVVASPSTDNPDYFYTWTRDSGLVLKTLVDLFRNGDTSLLSTIENYISAQAIVQGISNPSGDLSSGAGLGEPKFNVDETAYTGSWGRPQRDGPALRATAMIGFGQWLLDNGYTSTATDIVWPLVRNDLSYVAQYWNQTGYDLWEEVNGSSFFTIAVQHRALVEGSAFATAVGSSCSWCDSQAPEILCYLQSFWTGSFILANFDSSRSGKDANTLLGSIHTFDPEAACDDSTFQPCSPRALANHKEVVDSFRSIYTLNDGLSDSEAVAVGRYPEDTYYNGNPWFLCTLAAAEQLYDALYQWDKQGSLEVTDVSLDFFKALYSDAATGTYSSSSSTYSSIVDAVKTFADGFVSIVETHAASNGSMSEQYDKSDGEQLSARDLTWSYAALLTANNRRNSVVPASWGETSASSVPGTCAATSAIGTYSSVTVTSWPSIVATGGTTTTATPTGSGSVTSTSKTTATASKTSTSTSSTSCTTPTAVAVTFDLTATTTYGENIYLVGSISQLGDWETSDGIALSADKYTSSDPLWYVTVTLPAGESFEYKFIRIESDDSVEWESDPNREYTVPQACGTSTATVTDTWR.

Residues 1-18 form the signal peptide; the sequence is MSFRSLLALSGLVCTGLA. A propeptide spanning residues 19-24 is cleaved from the precursor; sequence NVISKR. Residue Trp144 participates in substrate binding. A glycan (N-linked (GlcNAc...) asparagine) is linked at Asn195. The active-site Proton acceptor is the Asp200. The Proton donor role is filled by Glu203. Disulfide bonds link Cys234–Cys237, Cys246–Cys473, and Cys286–Cys294. Asn419 is a glycosylation site (N-linked (GlcNAc...) asparagine). Residues Ser465, Ser467, and Ser468 are each glycosylated (O-linked (Man) serine). Thr476 carries O-linked (Man) threonine glycosylation. Ser477, Ser483, and Ser484 each carry an O-linked (Man) serine glycan. Residues Thr486 and Thr488 are each glycosylated (O-linked (Man) threonine). The O-linked (Man) serine glycan is linked to Ser492. O-linked (Man) threonine glycosylation is found at Thr496, Thr499, Thr500, Thr501, Thr502, Thr504, and Thr506. The tract at residues 498–533 is disordered; that stretch reads GTTTTATPTGSGSVTSTSKTTATASKTSTSTSSTSC. 2 O-linked (Man) serine glycosylation sites follow: Ser508 and Ser510. An O-linked (Man) threonine glycan is attached at Thr512. The O-linked (Man) serine glycan is linked to Ser513. The O-linked (Man) threonine glycan is linked to Thr514. Ser515 is a glycosylation site (O-linked (Man) serine). Thr517, Thr518, and Thr520 each carry an O-linked (Man) threonine glycan. Residue Ser522 is glycosylated (O-linked (Man) serine). Thr524 carries O-linked (Man) threonine glycosylation. An O-linked (Man) serine glycan is attached at Ser525. Thr526 carries O-linked (Man) threonine glycosylation. Ser527 carries O-linked (Man) serine glycosylation. Thr528 is a glycosylation site (O-linked (Man) threonine). 2 O-linked (Man) serine glycosylation sites follow: Ser529 and Ser530. A glycan (O-linked (Man) threonine) is linked at Thr531. An O-linked (Man) serine glycan is attached at Ser532. The 108-residue stretch at 533 to 640 folds into the CBM20 domain; that stretch reads CTTPTAVAVT…STATVTDTWR (108 aa). O-linked (Man) threonine glycosylation is found at Thr534 and Thr535. Positions 616 to 640 are disordered; that stretch reads SDPNREYTVPQACGTSTATVTDTWR. Residues 628–640 are compositionally biased toward polar residues; sequence CGTSTATVTDTWR.

Belongs to the glycosyl hydrolase 15 family.

It catalyses the reaction Hydrolysis of terminal (1-&gt;4)-linked alpha-D-glucose residues successively from non-reducing ends of the chains with release of beta-D-glucose.. This Aspergillus awamori (Black koji mold) protein is Glucoamylase (GLAA).